The sequence spans 388 residues: MGKKAIQFGGGNIGRGFVAEFLHEAGYEVVFIDVVDKIIDALKSTPSYEVSEVSEEGEKTKTITNYRAINSKTNEEDVVKEIGTADVVTCAVGPNVLKFIAPVIAKGIDARTASKPVAVIACENAIGATDTLRGFIEQHTDKDRLSSMSERARFANSAIDRIVPNQPPNAGLNVRIEKFYEWTVEQTPFGEFGHPDIPAIHWVDDLKPYIERKLFTVNTGHATTAYYGHVRGKKMIADALADAEIRKIVHNVLEQTAMLITTKHEITEQEQNEYVDTIVKRMSNPFLEDNVERVGRAPLRKLSRNERFIGPASQLAEKGLPFDALLGSIEMALRFQNVPGDEESAELAKILKEMSADEATGKLTGLEKSHPLYKPVQNVVAKVQKDSK.

Residue 5–16 (AIQFGGGNIGRG) participates in NAD(+) binding. Lys-213 is a catalytic residue.

Belongs to the mannitol dehydrogenase family. Monomer.

The catalysed reaction is D-mannitol 1-phosphate + NAD(+) = beta-D-fructose 6-phosphate + NADH + H(+). Catalyzes the NAD(H)-dependent interconversion of D-fructose 6-phosphate and D-mannitol 1-phosphate in the mannitol metabolic pathway. In Neosartorya fischeri (strain ATCC 1020 / DSM 3700 / CBS 544.65 / FGSC A1164 / JCM 1740 / NRRL 181 / WB 181) (Aspergillus fischerianus), this protein is Mannitol-1-phosphate 5-dehydrogenase (mpdA).